The primary structure comprises 142 residues: Maximins y/Hw (142 aa).

The N-terminal stretch at 1–18 (MIFKYIVAVSFLIASGYA) is a signal peptide. The propeptide occupies 19 to 43 (RSVKNDEQSLSQREVLEEESLREIR). Phe-68 carries the post-translational modification Phenylalanine amide. The propeptide occupies 72–121 (TAEDHEVMKRLEAVIRDLDSLDHSEEASERETRGFNQEEIANLFTKKEKR). Ile-141 is modified (isoleucine amide).

It belongs to the bombinin family. As to expression, expressed by the skin glands.

The protein resides in the secreted. Maximin-y shows antimicrobial activity against bacteria and against the fungus C.albicans. It has little hemolytic activity. Functionally, maximin-Hw shows antimicrobial activity against bacteria and against the fungus C.albicans. Shows strong hemolytic activity. In Bombina maxima (Giant fire-bellied toad), this protein is Maximins y/Hw.